A 333-amino-acid chain; its full sequence is Homeobox protein HMX1 (333 aa).

Disordered stretches follow at residues 1 to 74 (MAQD…STSA), 86 to 109 (GTEG…APRC), and 139 to 204 (CASP…KKKT). Over residues 17–30 (DYTQGNTDRSTAAA) the composition is skewed to polar residues. Gly residues predominate over residues 87 to 105 (TEGGGGTRRAAAGGGGGRG). Over residues 144 to 158 (TSDRDSPELPEDTER) the composition is skewed to basic and acidic residues. Positions 159–176 (AGGGGRAAARGPAGGRQS) are enriched in gly residues. The span at 181-192 (EEEEERGEEAGE) shows a compositional bias: acidic residues. Positions 201-260 (KKKTRTVFSRSQVFQLESTFDVKRYLSSSERAGLAASLHLTETQVKIWFQNRRNKWKRQL) form a DNA-binding region, homeobox. The short motif at 261–271 (AADLEAANLSH) is the HMX family specific domain 1 element.

This sequence belongs to the HMX homeobox family.

It is found in the nucleus. DNA-binding protein that binds to the 5'-CAAG-3' core sequence. May function as a transcriptional repressor. Seems to act as a transcriptional antagonist of NKX2-5. May play an important role in the development of craniofacial structures such as the eye and ear. The sequence is that of Homeobox protein HMX1 (HMX1) from Gallus gallus (Chicken).